Here is a 339-residue protein sequence, read N- to C-terminus: D-glycero-alpha-D-manno-heptose 7-phosphate kinase (339 aa).

17–20 contacts substrate; it reads GGTD. ATP contacts are provided by residues Ser57 and 110–116; that span reads GSGLGGS. Residues Ser116 and Glu148 each coordinate Mg(2+). Asp160 serves as the catalytic Proton acceptor.

Belongs to the GHMP kinase family.

It carries out the reaction D-glycero-alpha-D-manno-heptose 7-phosphate + ATP = D-glycero-alpha-D-manno-heptose 1,7-bisphosphate + ADP + H(+). The protein operates within nucleotide-sugar biosynthesis; GDP-D-glycero-alpha-D-manno-heptose biosynthesis; GDP-D-glycero-alpha-D-manno-heptose from D-glycero-alpha-D-manno-heptose 7-phosphate: step 1/3. It participates in capsule biogenesis; capsule polysaccharide biosynthesis. In terms of biological role, catalyzes the phosphorylation of D-glycero-alpha-D-manno-heptose 7-phosphate at the C-1 position to form D-glycero-alpha-D-manno-heptose 1,7-bisphosphate. This is D-glycero-alpha-D-manno-heptose 7-phosphate kinase from Campylobacter jejuni subsp. jejuni serotype O:2 (strain ATCC 700819 / NCTC 11168).